The sequence spans 1116 residues: MQMAQFLSLVRGDSIESPREITSPSNLISESGSNGWLIRFFDSSFFCEWIAVSYLYKHQHSGVRDYLCNRMYTLPLSGIESYLFQICYLMVHKPSPSLDKFVIDICAKSLKIALKVHWFLLAELEDSDDNEGISRIQEKCQIAATLVGEWSPLMRPHNEPSTPGSKVLNKFLSSKQKLFSLTLSPPTQKSLLFSPTSGSNLQDDGSQLSADDNKIFKRLIPSPKVRDALLFRKSADKEDEECEKDGFFKRLLRDSRGEDDEQRSNSEGFFKRLLKDNKSEEEEISNNSEGFFKRLRSSKGDEEELTSSSDGFFKRLLRDNKGDEEELGANSEGFFKKLLRDSKNEDEEPNANTEGFFKKLFHESKNEDDKVSNAVDDEEKDGFLKKLFKEKFDEKRNGNERNETDETVYTDETSGEDNGREGFFKKLFKEKFEDKPNIGKADDGNESEDDESSEFSLFRRLFRRHPEDVKTTLPSENCSNGGFVESSPGTENFFRKLFRDRDRSVEDSELFGSKKYKEKCPGSPKPQNNTPSKKPPLPNNTAAQFRKGSYHESLEFVHALCETSYDLVDIFPIEDRKTALRESIAEINSHLAQAETTGGICFPMGRGVYRVVNIPEDEYVLLNSREKVPYMICVEVLKAETPCGAKTTSTSLKLSKGGIPLANGDAFLHKPPPWAYPLSTAQEVYRNSADRMSLSTVEAIDQAMTHKSEVKLVNACLSVETHSNSNTKSVSSGVTGVLRTGLESDLEWVRLVLTADPGLRMESITDPKTPRRKEHRRVSSIVAYEEVRAAAAKGEAPPGLPLKGAGQDSSDAQPMANGGMLKAGDALSGEFWEGKRLRIRKDSIYGNLPGWDLRSIIVKSGDDCRQEHLAVQLISHFFDIFQEAGLPLWLRPYEVLVTSSYTALIETIPDTASIHSIKSRYPNITSLRDFFDAKFKENSPSFKLAQRNFVESMAGYSLVCYLLQIKDRHNGNLLMDEEGHIIHIDFGFMLSNSPGGVNFESAPFKLTRELLEVMDSDAEGLPSEFFDYFKVLCIQGFLTCRKHAERIILLVEMLQDSGFPCFKGGPRTIQNLRKRFHLSLTEEQCVSLVLSLISSSLDAWRTRQYDYYQRVLNGIR.

In terms of domain architecture, PIK helical spans 1–143 (MQMAQFLSLV…SRIQEKCQIA (143 aa)). 8 tandem repeats follow at residues 210 to 229 (ADDN…RDAL), 242 to 261 (CEKD…EDDE), 264 to 283 (SNSE…EEEE), 286 to 304 (NNSE…DEEE), 307 to 326 (SSSD…DEEE), 329 to 348 (ANSE…EDEE), 351 to 370 (ANTE…EDDK), and 378 to 396 (EEKD…DEKR). An 11 X 20 AA approximate repeats (PPC) region spans residues 210–507 (ADDNKIFKRL…FRDRDRSVED (298 aa)). Basic and acidic residues predominate over residues 394-404 (EKRNGNERNET). The disordered stretch occupies residues 394–417 (EKRNGNERNETDETVYTDETSGED). Acidic residues predominate over residues 405–415 (DETVYTDETSG). Residues 418-436 (NGREGFFKKLFKEKFEDKP) form repeat 9. Phosphoserine occurs at positions 447 and 452. A run of 2 repeats spans residues 452 to 470 (SSEF…EDVK) and 488 to 507 (PGTE…SVED). Disordered regions lie at residues 515–540 (KYKE…LPNN) and 794–813 (GEAP…SDAQ). The 272-residue stretch at 830–1101 (EFWEGKRLRI…LISSSLDAWR (272 aa)) folds into the PI3K/PI4K catalytic domain. Residues 836–842 (RLRIRKD) are G-loop. The tract at residues 964–972 (QIKDRHNGN) is catalytic loop. Residues 983-1007 (HIDFGFMLSNSPGGVNFESAPFKLT) are activation loop.

The protein belongs to the PI3/PI4-kinase family. Type III PI4K subfamily.

It is found in the cell membrane. It localises to the golgi apparatus. The protein localises to the trans-Golgi network. Its subcellular location is the cytoplasmic vesicle membrane. It catalyses the reaction a 1,2-diacyl-sn-glycero-3-phospho-(1D-myo-inositol) + ATP = a 1,2-diacyl-sn-glycero-3-phospho-(1D-myo-inositol 4-phosphate) + ADP + H(+). Functionally, acts on phosphatidylinositol (PtdIns) in the first committed step in the production of the second messenger inositol-1,4,5-trisphosphate. Necessary for proper organization of the trans-Golgi network (TGN) and post-Golgi secretion in root hairs. Together with PI4KB1, required during polarized root hair expansion and pollen tube elongation. Functions redundantly with PI4KB1 upstream of the cold response phosphoinositide-dependent phospholipase C (PI-PLC) pathway. The sequence is that of Phosphatidylinositol 4-kinase beta 2 (PI4KB2) from Arabidopsis thaliana (Mouse-ear cress).